The following is a 561-amino-acid chain: 3beta-hydroxysteroid-dehydrogenase/decarboxylase isoform 3 (561 aa).

Lys166 contributes to the NAD(+) binding site. A Reticulon domain is found at 379-561 (VADILLWRNE…SDASSKPMFM (183 aa)). A run of 3 helical transmembrane segments spans residues 392-412 (FVSF…GNTF), 420-440 (LFIF…IFGF), and 504-524 (SLAA…FIYE).

This sequence belongs to the 3-beta-HSD family.

The protein localises to the endoplasmic reticulum membrane. The catalysed reaction is a 3beta-hydroxysteroid-4alpha-carboxylate + NADP(+) = a 3-oxosteroid + CO2 + NADPH. It catalyses the reaction a 3beta-hydroxysteroid-4alpha-carboxylate + NAD(+) = a 3-oxosteroid + CO2 + NADH. It functions in the pathway steroid biosynthesis; zymosterol biosynthesis; zymosterol from lanosterol: step 4/6. The protein is 3beta-hydroxysteroid-dehydrogenase/decarboxylase isoform 3 (3BETAHSD/D3) of Arabidopsis thaliana (Mouse-ear cress).